Reading from the N-terminus, the 88-residue chain is Small ribosomal subunit protein bS20 (88 aa).

Disordered regions lie at residues Met1–Lys25 and His68–Ala88.

The protein belongs to the bacterial ribosomal protein bS20 family.

In terms of biological role, binds directly to 16S ribosomal RNA. The protein is Small ribosomal subunit protein bS20 of Cutibacterium acnes (strain DSM 16379 / KPA171202) (Propionibacterium acnes).